The chain runs to 65 residues: Beta-mammal toxin Tma1 (65 aa).

The 63-residue stretch at 2-64 (KEGYLVGNDG…TWNSAKNRCG (63 aa)) folds into the LCN-type CS-alpha/beta domain. Cystine bridges form between Cys-12–Cys-63, Cys-16–Cys-38, Cys-24–Cys-44, and Cys-28–Cys-46.

It belongs to the long (4 C-C) scorpion toxin superfamily. Sodium channel inhibitor family. Expressed by the venom gland.

The protein resides in the secreted. Its function is as follows. Beta toxins bind voltage-independently at site-4 of sodium channels (Nav) and shift the voltage of activation toward more negative potentials thereby affecting sodium channel activation and promoting spontaneous and repetitive firing. This toxin acts on human Nav1.4/SCN4A and Nav1.6/SCN8A voltage-gated sodium channels. The protein is Beta-mammal toxin Tma1 of Tityus macrochirus (Scorpion).